The chain runs to 374 residues: C-X-C chemokine receptor type 5 (374 aa).

The Extracellular portion of the chain corresponds to 1 to 57 (MNYPLTLDMGSITYNMDDLYKELAFYSNSTEIPLQDSNFCSTVEGPLLTSFKAVFMP). Asparagine 28 carries N-linked (GlcNAc...) asparagine glycosylation. The chain crosses the membrane as a helical span at residues 58–78 (VAYSLIFLLGMMGNILVLVIL). At 79–90 (ERHRHTRSSTET) the chain is on the cytoplasmic side. The helical transmembrane segment at 91–111 (FLFHLAVADLLLVFILPFAVA) threads the bilayer. Over 112–126 (EGSVGWVLGTFLCKT) the chain is Extracellular. Cysteine 124 and cysteine 204 are oxidised to a cystine. A helical membrane pass occupies residues 127 to 147 (VIALHKINFYCSSLLLACIAV). Topologically, residues 148–169 (DRYLAIVHAVHAYRRRRLLSIH) are cytoplasmic. The chain crosses the membrane as a helical span at residues 170 to 190 (ITCTAIWLAGFLFALPELLFA). The Extracellular portion of the chain corresponds to 191-221 (KVGQPHNNDSLPQCTFSQENEAETRAWFTSR). Residue asparagine 198 is glycosylated (N-linked (GlcNAc...) asparagine). The helical transmembrane segment at 222–242 (FLYHIGGFLLPMLVMGWCYVG) threads the bilayer. Residues 243–261 (VVHRLLQAQRRPQRQKAVR) are Cytoplasmic-facing. Residues 262–282 (VAILVTSIFFLCWSPYHIVIF) form a helical membrane-spanning segment. At 283-306 (LDTLERLKAVNSSCELSGYLSVAI) the chain is on the extracellular side. The chain crosses the membrane as a helical span at residues 307–327 (TLCEFLGLAHCCLNPMLYTFA). The Cytoplasmic segment spans residues 328–374 (GVKFRSDLSRLLTKLGCAGPASLCQLFPNWRKSSLSESENATSLTTF).

This sequence belongs to the G-protein coupled receptor 1 family. In terms of tissue distribution, mainly in spleen, in resting B-cells.

The protein resides in the cell membrane. Functionally, cytokine receptor that binds to B-lymphocyte chemoattractant (BLC). Involved in B-cell migration into B-cell follicles of spleen and Peyer patches but not into those of mesenteric or peripheral lymph nodes. This Mus musculus (Mouse) protein is C-X-C chemokine receptor type 5 (Cxcr5).